Here is a 310-residue protein sequence, read N- to C-terminus: tRNA pseudouridine synthase B (310 aa).

The Nucleophile role is filled by Asp-47.

The protein belongs to the pseudouridine synthase TruB family. Type 1 subfamily.

It catalyses the reaction uridine(55) in tRNA = pseudouridine(55) in tRNA. Its function is as follows. Responsible for synthesis of pseudouridine from uracil-55 in the psi GC loop of transfer RNAs. The protein is tRNA pseudouridine synthase B of Caulobacter vibrioides (strain ATCC 19089 / CIP 103742 / CB 15) (Caulobacter crescentus).